Here is a 292-residue protein sequence, read N- to C-terminus: Probable xyloglucan endotransglucosylase/hydrolase protein 6 (292 aa).

Positions 1–30 (MAKIYSPSFPGTLCLCIFTLLTLMFIRVSA) are cleaved as a signal peptide. A GH16 domain is found at 31-224 (RPATFVEDFK…WSKAPFYAYY (194 aa)). Glu110 functions as the Nucleophile in the catalytic mechanism. Catalysis depends on Glu114, which acts as the Proton donor. Glu114 contributes to the xyloglucan binding site. N-linked (GlcNAc...) asparagine glycosylation is present at Asn118. Xyloglucan-binding positions include 127-129 (QTN), 137-139 (DRE), 203-204 (DW), and Gly208. Intrachain disulfides connect Cys232–Cys240 and Cys277–Cys290. Arg282 lines the xyloglucan pocket.

The protein belongs to the glycosyl hydrolase 16 family. XTH group 1 subfamily. Contains at least one intrachain disulfide bond essential for its enzymatic activity.

It localises to the secreted. The protein resides in the cell wall. The protein localises to the extracellular space. Its subcellular location is the apoplast. The catalysed reaction is breaks a beta-(1-&gt;4) bond in the backbone of a xyloglucan and transfers the xyloglucanyl segment on to O-4 of the non-reducing terminal glucose residue of an acceptor, which can be a xyloglucan or an oligosaccharide of xyloglucan.. In terms of biological role, catalyzes xyloglucan endohydrolysis (XEH) and/or endotransglycosylation (XET). Cleaves and religates xyloglucan polymers, an essential constituent of the primary cell wall, and thereby participates in cell wall construction of growing tissues. This chain is Probable xyloglucan endotransglucosylase/hydrolase protein 6 (XTH6), found in Arabidopsis thaliana (Mouse-ear cress).